Reading from the N-terminus, the 1167-residue chain is Pesticidal crystal protein Cry1Ja (1167 aa).

This sequence belongs to the delta endotoxin family.

Promotes colloidosmotic lysis by binding to the midgut epithelial cells of many lepidopteran larvae. The chain is Pesticidal crystal protein Cry1Ja (cry1Ja) from Bacillus thuringiensis.